The chain runs to 235 residues: Replication protein (235 aa).

DNA is bound at residue Tyr149.

The protein belongs to the Gram-positive plasmids replication protein type 1 family.

In terms of biological role, produces a single-strand nick in a specific site of the plasmid, and this nick results in single-strand replication by rolling circle mechanism. The sequence is that of Replication protein (repB) from Bacillus sp.